The primary structure comprises 442 residues: UDP-N-acetylmuramate--L-alanine ligase (442 aa).

109–115 serves as a coordination point for ATP; it reads GAHGKTS.

The protein belongs to the MurCDEF family.

Its subcellular location is the cytoplasm. It carries out the reaction UDP-N-acetyl-alpha-D-muramate + L-alanine + ATP = UDP-N-acetyl-alpha-D-muramoyl-L-alanine + ADP + phosphate + H(+). It functions in the pathway cell wall biogenesis; peptidoglycan biosynthesis. Its function is as follows. Cell wall formation. This chain is UDP-N-acetylmuramate--L-alanine ligase, found in Streptococcus pyogenes serotype M28 (strain MGAS6180).